Reading from the N-terminus, the 151-residue chain is MNTIKTRFGVIDYDPANLLLFPNGLVGLPHLRNFIVMPNKKEGPLFWIQSVDDPDMAFVLTDPNNFFPDYQIQPGKDEHTTLGISGSDEYFILSVVTVPADQKITLNLAAPIIFTPTNNRAVQVILGGDGYSTKTPLPTVKRHERRSVVNE.

It belongs to the FliW family. As to quaternary structure, interacts with translational regulator CsrA and flagellin(s).

The protein localises to the cytoplasm. Its function is as follows. Acts as an anti-CsrA protein, binds CsrA and prevents it from repressing translation of its target genes, one of which is flagellin. Binds to flagellin and participates in the assembly of the flagellum. This Desulfotalea psychrophila (strain LSv54 / DSM 12343) protein is Flagellar assembly factor FliW 2.